We begin with the raw amino-acid sequence, 298 residues long: Glutamyl-Q tRNA(Asp) synthetase (298 aa).

L-glutamate is bound by residues R9–S13 and E45. The 'HIGH' region signature appears at P12–S22. Residues C101, C103, Y115, and C119 each coordinate Zn(2+). Y172 and R190 together coordinate L-glutamate. Positions K228–Q232 match the 'KMSKS' region motif. ATP is bound at residue K231.

Belongs to the class-I aminoacyl-tRNA synthetase family. GluQ subfamily. The cofactor is Zn(2+).

Catalyzes the tRNA-independent activation of glutamate in presence of ATP and the subsequent transfer of glutamate onto a tRNA(Asp). Glutamate is transferred on the 2-amino-5-(4,5-dihydroxy-2-cyclopenten-1-yl) moiety of the queuosine in the wobble position of the QUC anticodon. The protein is Glutamyl-Q tRNA(Asp) synthetase of Cronobacter sakazakii (strain ATCC BAA-894) (Enterobacter sakazakii).